The following is an 89-amino-acid chain: Small ribosomal subunit protein uS14 (89 aa).

This sequence belongs to the universal ribosomal protein uS14 family. In terms of assembly, part of the 30S ribosomal subunit. Contacts proteins S3 and S10.

Its function is as follows. Binds 16S rRNA, required for the assembly of 30S particles and may also be responsible for determining the conformation of the 16S rRNA at the A site. The protein is Small ribosomal subunit protein uS14 of Streptococcus pneumoniae serotype 2 (strain D39 / NCTC 7466).